The chain runs to 127 residues: Fluoride-specific ion channel FluC (127 aa).

4 helical membrane-spanning segments follow: residues 4-24 (SLLV…LLGM), 37-57 (TVVA…FLAA), 68-88 (LIIT…AETV), and 96-116 (LLWA…MTAA). Gly-75 and Thr-78 together coordinate Na(+).

This sequence belongs to the fluoride channel Fluc/FEX (TC 1.A.43) family.

The protein localises to the cell inner membrane. The enzyme catalyses fluoride(in) = fluoride(out). With respect to regulation, na(+) is not transported, but it plays an essential structural role and its presence is essential for fluoride channel function. Its function is as follows. Fluoride-specific ion channel. Important for reducing fluoride concentration in the cell, thus reducing its toxicity. This chain is Fluoride-specific ion channel FluC, found in Pseudomonas syringae pv. maculicola.